Reading from the N-terminus, the 21-residue chain is Magainin-B1 (21 aa).

As to expression, expressed by the skin glands.

The protein localises to the secreted. Has no antimicrobial activity against tested bacteria. In Xenopus borealis (Kenyan clawed frog), this protein is Magainin-B1.